Reading from the N-terminus, the 88-residue chain is UPF0213 protein EF_2693 (88 aa).

The GIY-YIG domain occupies 5–82 (KSHYFYVLLC…KKLTRKQKEQ (78 aa)).

It belongs to the UPF0213 family.

This chain is UPF0213 protein EF_2693, found in Enterococcus faecalis (strain ATCC 700802 / V583).